The sequence spans 211 residues: Thiamine-phosphate synthase (211 aa).

4-amino-2-methyl-5-(diphosphooxymethyl)pyrimidine is bound by residues 38–42 (QLREK) and asparagine 70. The Mg(2+) site is built by aspartate 71 and aspartate 90. Serine 109 contacts 4-amino-2-methyl-5-(diphosphooxymethyl)pyrimidine. 135-137 (TST) serves as a coordination point for 2-[(2R,5Z)-2-carboxy-4-methylthiazol-5(2H)-ylidene]ethyl phosphate. Position 138 (lysine 138) interacts with 4-amino-2-methyl-5-(diphosphooxymethyl)pyrimidine. 2-[(2R,5Z)-2-carboxy-4-methylthiazol-5(2H)-ylidene]ethyl phosphate contacts are provided by residues glycine 165 and 185–186 (IS).

It belongs to the thiamine-phosphate synthase family. It depends on Mg(2+) as a cofactor.

It carries out the reaction 2-[(2R,5Z)-2-carboxy-4-methylthiazol-5(2H)-ylidene]ethyl phosphate + 4-amino-2-methyl-5-(diphosphooxymethyl)pyrimidine + 2 H(+) = thiamine phosphate + CO2 + diphosphate. The catalysed reaction is 2-(2-carboxy-4-methylthiazol-5-yl)ethyl phosphate + 4-amino-2-methyl-5-(diphosphooxymethyl)pyrimidine + 2 H(+) = thiamine phosphate + CO2 + diphosphate. It catalyses the reaction 4-methyl-5-(2-phosphooxyethyl)-thiazole + 4-amino-2-methyl-5-(diphosphooxymethyl)pyrimidine + H(+) = thiamine phosphate + diphosphate. The protein operates within cofactor biosynthesis; thiamine diphosphate biosynthesis; thiamine phosphate from 4-amino-2-methyl-5-diphosphomethylpyrimidine and 4-methyl-5-(2-phosphoethyl)-thiazole: step 1/1. Its function is as follows. Condenses 4-methyl-5-(beta-hydroxyethyl)thiazole monophosphate (THZ-P) and 2-methyl-4-amino-5-hydroxymethyl pyrimidine pyrophosphate (HMP-PP) to form thiamine monophosphate (TMP). The protein is Thiamine-phosphate synthase of Clostridium acetobutylicum (strain ATCC 824 / DSM 792 / JCM 1419 / IAM 19013 / LMG 5710 / NBRC 13948 / NRRL B-527 / VKM B-1787 / 2291 / W).